Reading from the N-terminus, the 73-residue chain is Putative defensin-like protein 33 (73 aa).

Residues 1 to 25 form the signal peptide; the sequence is MASNKVSFIFILFLCVLSTAEFGEA. 3 cysteine pairs are disulfide-bonded: Cys33–Cys59, Cys45–Cys68, and Cys49–Cys70.

The protein belongs to the DEFL family.

The protein resides in the secreted. This Arabidopsis thaliana (Mouse-ear cress) protein is Putative defensin-like protein 33.